The sequence spans 126 residues: Aspartate 1-decarboxylase 2 (126 aa).

The active-site Schiff-base intermediate with substrate; via pyruvic acid is S25. S25 is subject to Pyruvic acid (Ser). T57 lines the substrate pocket. Catalysis depends on Y58, which acts as the Proton donor. 73–75 (GSA) is a binding site for substrate.

This sequence belongs to the PanD family. In terms of assembly, heterooctamer of four alpha and four beta subunits. The cofactor is pyruvate. Post-translationally, is synthesized initially as an inactive proenzyme, which is activated by self-cleavage at a specific serine bond to produce a beta-subunit with a hydroxyl group at its C-terminus and an alpha-subunit with a pyruvoyl group at its N-terminus.

The protein localises to the cytoplasm. The enzyme catalyses L-aspartate + H(+) = beta-alanine + CO2. Its pathway is cofactor biosynthesis; (R)-pantothenate biosynthesis; beta-alanine from L-aspartate: step 1/1. In terms of biological role, catalyzes the pyruvoyl-dependent decarboxylation of aspartate to produce beta-alanine. This is Aspartate 1-decarboxylase 2 from Polaromonas sp. (strain JS666 / ATCC BAA-500).